The sequence spans 254 residues: NAD kinase (254 aa).

Asp44 functions as the Proton acceptor in the catalytic mechanism. Residues 44 to 45 (DG), 114 to 115 (NE), Asp144, Ala152, 155 to 160 (TAYNYS), and Ala179 contribute to the NAD(+) site.

It belongs to the NAD kinase family. A divalent metal cation serves as cofactor.

The protein localises to the cytoplasm. The catalysed reaction is NAD(+) + ATP = ADP + NADP(+) + H(+). Involved in the regulation of the intracellular balance of NAD and NADP, and is a key enzyme in the biosynthesis of NADP. Catalyzes specifically the phosphorylation on 2'-hydroxyl of the adenosine moiety of NAD to yield NADP. In Cereibacter sphaeroides (strain ATCC 17029 / ATH 2.4.9) (Rhodobacter sphaeroides), this protein is NAD kinase.